Reading from the N-terminus, the 449-residue chain is Heterogeneous nuclear ribonucleoprotein H2 (449 aa).

Methionine 1 is modified (N-acetylmethionine). Methionine 2 bears the N-acetylmethionine; in Heterogeneous nuclear ribonucleoprotein H2, N-terminally processed mark. One can recognise an RRM 1 domain in the interval 11-90; sequence FVVKVRGLPW…RYVEVFKSNS (80 aa). Residue serine 23 is modified to Phosphoserine. Lysine 35 participates in a covalent cross-link: Glycyl lysine isopeptide (Lys-Gly) (interchain with G-Cter in SUMO2). Phosphoserine occurs at positions 54 and 63. A Glycyl lysine isopeptide (Lys-Gly) (interchain with G-Cter in SUMO2) cross-link involves residue lysine 87. Serine 90 is subject to Phosphoserine. Residue lysine 98 forms a Glycyl lysine isopeptide (Lys-Gly) (interchain with G-Cter in SUMO2) linkage. The RRM 2 domain occupies 111–188; that stretch reads GFVRLRGLPF…RYIEIFKSSR (78 aa). Residue arginine 233 is modified to Dimethylated arginine; alternate. An Omega-N-methylarginine; alternate modification is found at arginine 233. The stretch at 234-249 is one 1-1 repeat; that stretch reads GAYGGGYGGYDDYGGY. The 2 X 16 AA Gly-rich approximate repeats stretch occupies residues 234–433; the sequence is GAYGGGYGGY…YGGQSSMSGY (200 aa). A Phosphotyrosine modification is found at tyrosine 246. Positions 289 to 364 constitute an RRM 3 domain; it reads HCVHMRGLPY…RYVELFLNST (76 aa). Serine 310 is subject to Phosphoserine. 3 consecutive repeat copies span residues 354–372, 374–392, and 418–433. Residues 354-392 are 2 X 19 AA perfect repeats; the sequence is HRYVELFLNSTAGTSGGAYDHSYVELFLNSTAGASGGAY.

Component of a ribonucleoprotein complex containing mRNAs and RNA-binding proteins including DDX5, HNRNPH2 and SRSF1 as well as splicing regulator ARVCF. Interacts with TXNL4/DIM1.

Its subcellular location is the nucleus. It is found in the nucleoplasm. Functionally, this protein is a component of the heterogeneous nuclear ribonucleoprotein (hnRNP) complexes which provide the substrate for the processing events that pre-mRNAs undergo before becoming functional, translatable mRNAs in the cytoplasm. Binds poly(RG). In Rattus norvegicus (Rat), this protein is Heterogeneous nuclear ribonucleoprotein H2 (Hnrnph2).